A 465-amino-acid chain; its full sequence is Na(+)-translocating NADH-quinone reductase subunit A (465 aa).

It belongs to the NqrA family. Composed of six subunits; NqrA, NqrB, NqrC, NqrD, NqrE and NqrF.

The catalysed reaction is a ubiquinone + n Na(+)(in) + NADH + H(+) = a ubiquinol + n Na(+)(out) + NAD(+). In terms of biological role, NQR complex catalyzes the reduction of ubiquinone-1 to ubiquinol by two successive reactions, coupled with the transport of Na(+) ions from the cytoplasm to the periplasm. NqrA to NqrE are probably involved in the second step, the conversion of ubisemiquinone to ubiquinol. The sequence is that of Na(+)-translocating NADH-quinone reductase subunit A from Chlamydia muridarum (strain MoPn / Nigg).